The following is a 444-amino-acid chain: Multidrug resistance protein MdtA (444 aa).

An N-terminal signal peptide occupies residues 1 to 20 (MKSQSKRTSRLFVFVGVVVA). The span at 37-52 (NNTSGAQQSARGQDTS) shows a compositional bias: polar residues. Disordered regions lie at residues 37 to 60 (NNTSGAQQSARGQDTSHGGRRNTP) and 398 to 444 (TPRS…AEKS). Positions 406–419 (ANPASAEKAAAEAE) are enriched in low complexity. Polar residues predominate over residues 435–444 (ARSTTAAEKS).

This sequence belongs to the membrane fusion protein (MFP) (TC 8.A.1) family. As to quaternary structure, part of a tripartite efflux system composed of MdtA, MdtB and MdtC.

It is found in the cell inner membrane. The protein is Multidrug resistance protein MdtA of Yersinia pestis bv. Antiqua (strain Antiqua).